The chain runs to 467 residues: Glutamate--tRNA ligase (467 aa).

A 'HIGH' region motif is present at residues 10–20; sequence PSPTGYLHVGG. The 'KMSKS' region signature appears at 238–242; sequence RLSKR. Residue K241 coordinates ATP.

The protein belongs to the class-I aminoacyl-tRNA synthetase family. Glutamate--tRNA ligase type 1 subfamily. As to quaternary structure, monomer.

The protein localises to the cytoplasm. The enzyme catalyses tRNA(Glu) + L-glutamate + ATP = L-glutamyl-tRNA(Glu) + AMP + diphosphate. Functionally, catalyzes the attachment of glutamate to tRNA(Glu) in a two-step reaction: glutamate is first activated by ATP to form Glu-AMP and then transferred to the acceptor end of tRNA(Glu). The chain is Glutamate--tRNA ligase from Citrifermentans bemidjiense (strain ATCC BAA-1014 / DSM 16622 / JCM 12645 / Bem) (Geobacter bemidjiensis).